Reading from the N-terminus, the 167-residue chain is Osteocalcin 2a (167 aa).

An N-terminal signal peptide occupies residues 1-18 (MKSLTLLTICAVLSVSLS). The propeptide occupies 19–118 (MNDLALDVVL…LASVLLRRKR (100 aa)). The disordered stretch occupies residues 28–99 (LDPAPDPATE…TTEDPAAATE (72 aa)). Low complexity predominate over residues 38–87 (PAPAADSSASSSASSSSSSASDSSASASDSSDSDSSSASSSSSSSESASA). In terms of domain architecture, Gla spans 131 to 163 (QVESLSEVCELNLACEHMAETAGIVAAYTAYYG). Residues glutamate 133, glutamate 137, and glutamate 140 each coordinate Ca(2+). Residues glutamate 133, glutamate 137, and glutamate 140 each carry the 4-carboxyglutamate modification. Cysteines 139 and 145 form a disulfide.

Belongs to the osteocalcin/matrix Gla protein family. Post-translationally, gamma-carboxyglutamate residues are formed by vitamin K dependent carboxylation. These residues are essential for the binding of calcium.

The protein resides in the secreted. In terms of biological role, binds strongly to apatite and calcium. This is Osteocalcin 2a from Oncorhynchus mykiss (Rainbow trout).